The chain runs to 2430 residues: Spatacsin (2430 aa).

Phosphoserine occurs at positions 1942 and 1943.

In terms of assembly, interacts with AP5Z1, AP5B1, AP5S1 and ZFYVE26. In terms of tissue distribution, ubiquitously expressed at low level. Expressed in embryonic and adult cortical projection neurons.

The protein localises to the cytoplasm. Its subcellular location is the cytosol. It localises to the nucleus. The protein resides in the cell projection. It is found in the axon. The protein localises to the dendrite. Its subcellular location is the synapse. Functionally, may play a role in neurite plasticity by maintaining cytoskeleton stability and regulating synaptic vesicle transport. The protein is Spatacsin (Spg11) of Mus musculus (Mouse).